Here is a 252-residue protein sequence, read N- to C-terminus: 3-deoxy-manno-octulosonate cytidylyltransferase (252 aa).

Belongs to the KdsB family.

The protein resides in the cytoplasm. The catalysed reaction is 3-deoxy-alpha-D-manno-oct-2-ulosonate + CTP = CMP-3-deoxy-beta-D-manno-octulosonate + diphosphate. Its pathway is nucleotide-sugar biosynthesis; CMP-3-deoxy-D-manno-octulosonate biosynthesis; CMP-3-deoxy-D-manno-octulosonate from 3-deoxy-D-manno-octulosonate and CTP: step 1/1. It functions in the pathway bacterial outer membrane biogenesis; lipopolysaccharide biosynthesis. In terms of biological role, activates KDO (a required 8-carbon sugar) for incorporation into bacterial lipopolysaccharide in Gram-negative bacteria. This chain is 3-deoxy-manno-octulosonate cytidylyltransferase, found in Thiobacillus denitrificans (strain ATCC 25259 / T1).